The chain runs to 264 residues: Tritrans,polycis-undecaprenyl-diphosphate synthase (geranylgeranyl-diphosphate specific) (264 aa).

Asp43 is an active-site residue. Residue Asp43 coordinates Mg(2+). Residues 44-47, Trp48, His60, and 88-90 contribute to the substrate site; these read GNRR and STE. Asn91 acts as the Proton acceptor in catalysis. Substrate-binding positions include Phe92, Arg94, Arg213, and 219–221; that span reads RIS. A Mg(2+)-binding site is contributed by Glu232.

Belongs to the UPP synthase family. In terms of assembly, homodimer. The cofactor is Mg(2+).

It catalyses the reaction geranylgeranyl diphosphate + 7 isopentenyl diphosphate = tri-trans,hepta-cis-undecaprenyl diphosphate + 7 diphosphate. Its function is as follows. Catalyzes the sequential condensation of isopentenyl diphosphate (IPP) with geranylgeranyl diphosphate (GGPP) to yield (2Z,6Z,10Z,14Z,18Z,22Z,26Z,30E,34E,38E)-undecaprenyl diphosphate (tritrans,heptacis-UPP). It is probably the precursor of glycosyl carrier lipids. The protein is Tritrans,polycis-undecaprenyl-diphosphate synthase (geranylgeranyl-diphosphate specific) of Pyrococcus horikoshii (strain ATCC 700860 / DSM 12428 / JCM 9974 / NBRC 100139 / OT-3).